A 205-amino-acid polypeptide reads, in one-letter code: Small ribosomal subunit protein uS4 (205 aa).

The disordered stretch occupies residues 20 to 46 (WGRSKSPVNRREYGPGQHGQRRKGKLS). One can recognise an S4 RNA-binding domain in the interval 94 to 157 (RRLDAVVYRA…RQLTLVLEAS (64 aa)).

This sequence belongs to the universal ribosomal protein uS4 family. As to quaternary structure, part of the 30S ribosomal subunit. Contacts protein S5. The interaction surface between S4 and S5 is involved in control of translational fidelity.

Its function is as follows. One of the primary rRNA binding proteins, it binds directly to 16S rRNA where it nucleates assembly of the body of the 30S subunit. With S5 and S12 plays an important role in translational accuracy. The chain is Small ribosomal subunit protein uS4 from Beijerinckia indica subsp. indica (strain ATCC 9039 / DSM 1715 / NCIMB 8712).